Reading from the N-terminus, the 564-residue chain is MFS-type efflux pump LUC4 (564 aa).

Positions 1–15 (MGQSQDNTQLTTASP) are enriched in polar residues. The disordered stretch occupies residues 1-35 (MGQSQDNTQLTTASPQAEKDLSSNDNPPESEPAAP). A run of 5 helical transmembrane segments spans residues 42-62 (WLVFIAIALTTFLAALDTSII), 78-98 (LYVWIVDSYLLASTATIPIFA), 108-128 (SLTLIAVCLFTLGSGLCGGAH), 141-161 (GVGGGGILTMSEIVVCDMVSV), and 170-190 (IIGGVWAIASVIAPIMGGAFA). N-linked (GlcNAc...) asparagine glycosylation occurs at N192. 3 helical membrane-spanning segments follow: residues 197–217 (WIFYINLPIAGVVLVALIVFL), 236–256 (WGGSVLLIASVTAVVLALSWG), and 268–288 (LVPLILGLVGQLAFFAYQGAP). A glycan (N-linked (GlcNAc...) asparagine) is linked at N302. A run of 5 helical transmembrane segments spans residues 308–328 (LFVISFVHSMLLFWVCYFLPV), 343–363 (VMLFPIATTSAPGGVIAGIFI), 371–391 (VWHFVGFALMSISCGLFTLLD), 404–424 (LLFGFGTGFVFTSCLPPILAS), and 436–456 (AWTFLRNFGSIWGIAIPAAAF). N461 carries an N-linked (GlcNAc...) asparagine glycan. The helical transmembrane segment at 512 to 532 (KLVWQVSIAFSVLGFVLAFLV) threads the bilayer.

The protein belongs to the major facilitator superfamily. TCR/Tet family.

It localises to the membrane. In terms of biological role, MFS-type efflux pump; part of the gene cluster that mediates the biosynthesis of the mycotoxin lucilactaene and the lucilactaene-related compound NG-391 that act as cell cycle inhibitors with potent growth inhibitory activity against malarial parasites, moderate growth inhibitory activity against cancer cells, and no activity against bacteria and fungi. The polypeptide is MFS-type efflux pump LUC4 (Fusarium sp).